The sequence spans 910 residues: DNA mismatch repair protein MutS (910 aa).

615 to 622 (GPNMAGKS) is an ATP binding site.

It belongs to the DNA mismatch repair MutS family.

Functionally, this protein is involved in the repair of mismatches in DNA. It is possible that it carries out the mismatch recognition step. This protein has a weak ATPase activity. In Clostridium perfringens (strain ATCC 13124 / DSM 756 / JCM 1290 / NCIMB 6125 / NCTC 8237 / Type A), this protein is DNA mismatch repair protein MutS.